Reading from the N-terminus, the 567-residue chain is UPF0313 protein Tpet_0582 (567 aa).

In terms of domain architecture, Radical SAM core spans 288–560 (KAIETVKFSI…NKMKENVLFK (273 aa)). 3 residues coordinate [4Fe-4S] cluster: cysteine 303, cysteine 307, and cysteine 310.

It belongs to the UPF0313 family. Requires [4Fe-4S] cluster as cofactor.

The polypeptide is UPF0313 protein Tpet_0582 (Thermotoga petrophila (strain ATCC BAA-488 / DSM 13995 / JCM 10881 / RKU-1)).